The sequence spans 635 residues: Extracellular metalloproteinase 1 (635 aa).

Residues 1–19 (MHGLLLAAGLLSLPLHVLA) form the signal peptide. Residues 20–246 (HPQPSTSTSL…VHNVVDYVAH (227 aa)) constitute a propeptide that is removed on maturation. N-linked (GlcNAc...) asparagine glycosylation is present at Asn287. Position 430 (His430) interacts with Zn(2+). Glu431 is an active-site residue. His434 provides a ligand contact to Zn(2+). N-linked (GlcNAc...) asparagine glycosylation is found at Asn475, Asn594, and Asn623.

It belongs to the peptidase M36 family. The cofactor is Zn(2+).

The protein resides in the secreted. Its function is as follows. Secreted metalloproteinase probably acting as a virulence factor. This chain is Extracellular metalloproteinase 1 (MEP1), found in Trichophyton rubrum (Athlete's foot fungus).